The following is a 75-amino-acid chain: Sec-independent protein translocase protein TatA (75 aa).

Residues 1–21 (MGGISIWQLLIIVAIIVLLFG) traverse the membrane as a helical segment. Residues 50–75 (DAEFKSLNKDESATAGSEKVKDKEQA) are disordered.

This sequence belongs to the TatA/E family. The Tat system comprises two distinct complexes: a TatABC complex, containing multiple copies of TatA, TatB and TatC subunits, and a separate TatA complex, containing only TatA subunits. Substrates initially bind to the TatABC complex, which probably triggers association of the separate TatA complex to form the active translocon.

It localises to the cell inner membrane. Part of the twin-arginine translocation (Tat) system that transports large folded proteins containing a characteristic twin-arginine motif in their signal peptide across membranes. TatA could form the protein-conducting channel of the Tat system. The polypeptide is Sec-independent protein translocase protein TatA (Mannheimia succiniciproducens (strain KCTC 0769BP / MBEL55E)).